The chain runs to 629 residues: tRNA uridine 5-carboxymethylaminomethyl modification enzyme MnmG (629 aa).

Position 13 to 18 (13 to 18 (GGGHAG)) interacts with FAD. 273-287 (GPRYCPSIEDKIMRF) provides a ligand contact to NAD(+).

It belongs to the MnmG family. In terms of assembly, homodimer. Heterotetramer of two MnmE and two MnmG subunits. FAD is required as a cofactor.

The protein resides in the cytoplasm. In terms of biological role, NAD-binding protein involved in the addition of a carboxymethylaminomethyl (cmnm) group at the wobble position (U34) of certain tRNAs, forming tRNA-cmnm(5)s(2)U34. This is tRNA uridine 5-carboxymethylaminomethyl modification enzyme MnmG from Tolumonas auensis (strain DSM 9187 / NBRC 110442 / TA 4).